We begin with the raw amino-acid sequence, 784 residues long: Toll-like receptor 2 (784 aa).

The N-terminal stretch at 1-20 (MPRALWTAWVWAXIILSTEG) is a signal peptide. At 21–587 (ASDQASSLSC…ARLSLSECHR (567 aa)) the chain is on the extracellular side. Cysteine 30 and cysteine 36 are joined by a disulfide. LRR repeat units follow at residues 54–77 (VKSL…RCVN), 78–101 (LKTL…HLRN), 102–125 (LEYL…SLYV), 126–150 (LKFL…HLPN), 151–175 (LXTL…GLTF), 176–199 (LEEL…SIQN), 200–223 (ISHL…IVSS), 224–250 (LDCL…MSTS), 251–278 (VKKL…YVSG), 279–308 (ILEV…HLGN), 309–337 (VETL…LTGK), 338–361 (VKRV…HLKS), 362–388 (LEYL…AWPF), 389–414 (LQTL…TLEN), 415–437 (LNSL…WPGK), 438–457 (MKQL…CLPQ), 458–478 (TLEI…ILPQ), 479–500 (LKEL…FLPV), and 501–524 (LSVM…SFQQ). A glycan (N-linked (GlcNAc...) asparagine) is linked at asparagine 114. Asparagine 199 carries N-linked (GlcNAc...) asparagine glycosylation. The cysteines at positions 353 and 382 are disulfide-linked. A disulfide bond links cysteine 432 and cysteine 454. A glycan (N-linked (GlcNAc...) asparagine) is linked at asparagine 442. One can recognise an LRRCT domain in the interval 525–579 (LKTLEAGGNNFICSCDFLSFTQGQQALGRVLVDWPDDYRCDSPSHVRGQRVQDAR). The chain crosses the membrane as a helical span at residues 588-608 (AAVVSAACCALFLVLLLTGVL). The Cytoplasmic segment spans residues 609–784 (CHRFHGLWYM…WLNLRAAIRS (176 aa)). In terms of domain architecture, TIR spans 639–782 (ICYDAFVSYS…GFWLNLRAAI (144 aa)). Lysine 754 is covalently cross-linked (Glycyl lysine isopeptide (Lys-Gly) (interchain with G-Cter in ubiquitin)). An ATG16L1-binding motif motif is present at residues 761–778 (YLEWPVDETQQEGFWLNL).

This sequence belongs to the Toll-like receptor family. Interacts with LY96, TLR1 and TLR6 (via extracellular domain). TLR2 seems to exist in heterodimers with either TLR1 or TLR6 before stimulation by the ligand. The heterodimers form bigger oligomers in response to their corresponding ligands as well as further heterotypic associations with other receptors such as CD14 and/or CD36. Binds MYD88 (via TIR domain). Interacts with TICAM1. Interacts with CNPY3. Interacts with ATG16L1. Interacts with PPP1R11. Interacts with TICAM2. Interacts with TIRAP. Post-translationally, ubiquitinated at Lys-754 by PPP1R11, leading to its degradation. Deubiquitinated by USP2. Glycosylation of Asn-442 is critical for secretion of the N-terminal ectodomain of TLR2.

Its subcellular location is the membrane. It is found in the cytoplasmic vesicle. The protein localises to the phagosome membrane. It localises to the membrane raft. Its function is as follows. Cooperates with LY96 to mediate the innate immune response to bacterial lipoproteins and other microbial cell wall components. Cooperates with TLR1 or TLR6 to mediate the innate immune response to bacterial lipoproteins or lipopeptides. Acts via MYD88 and TRAF6, leading to NF-kappa-B activation, cytokine secretion and the inflammatory response. May also promote apoptosis in response to lipoproteins. Forms activation clusters composed of several receptors depending on the ligand, these clusters trigger signaling from the cell surface and subsequently are targeted to the Golgi in a lipid-raft dependent pathway. Forms the cluster TLR2:TLR6:CD14:CD36 in response to diacylated lipopeptides and TLR2:TLR1:CD14 in response to triacylated lipopeptides. The sequence is that of Toll-like receptor 2 (TLR2) from Bison bison (American bison).